The following is a 199-amino-acid chain: Ribosome maturation factor RimM (199 aa).

The PRC barrel domain maps to 95-168 (EDEFYHADLV…FVRVDPVAAG (74 aa)). The disordered stretch occupies residues 167-199 (AGLVEDEDGDAPREEDFDPKGRPRGPRDAGGNR). Basic and acidic residues predominate over residues 176–193 (DAPREEDFDPKGRPRGPR).

The protein belongs to the RimM family. Binds ribosomal protein uS19.

The protein resides in the cytoplasm. An accessory protein needed during the final step in the assembly of 30S ribosomal subunit, possibly for assembly of the head region. Essential for efficient processing of 16S rRNA. May be needed both before and after RbfA during the maturation of 16S rRNA. It has affinity for free ribosomal 30S subunits but not for 70S ribosomes. The protein is Ribosome maturation factor RimM of Mesorhizobium japonicum (strain LMG 29417 / CECT 9101 / MAFF 303099) (Mesorhizobium loti (strain MAFF 303099)).